The primary structure comprises 207 residues: NAD--protein ADP-ribosyltransferase modB (207 aa).

NAD(+) is bound at residue arginine 73. Glutamate 173 is a catalytic residue.

The protein belongs to the Tevenvirinae NAD--protein ADP-ribosyltransferase modA family.

It localises to the virion. It carries out the reaction L-arginyl-[protein] + NAD(+) = N(omega)-(ADP-D-ribosyl)-L-arginyl-[protein] + nicotinamide + H(+). ADP-ribosyltransferase that regulates transcription by ADP-ribosylation of host ribosomal protein S1. Additional identified targets include proteins involved in either translation or cellular metabolism such as elongation factor-Tu or trigger factor. Also reprograms the host's gene-expression system by RNAylating host ribosomal protein S1. ModB can attach NAD-capped RNAs to target proteins post-transcriptionally resulting in covalent RNA-protein conjugates. The sequence is that of NAD--protein ADP-ribosyltransferase modB from Enterobacteria phage T4 (Bacteriophage T4).